A 578-amino-acid polypeptide reads, in one-letter code: NADPH oxidase 4 (578 aa).

Topologically, residues Met1–His16 are cytoplasmic. A helical membrane pass occupies residues Leu17 to Tyr37. Residues Asn38–Ser62 are Extracellular-facing. One can recognise a Ferric oxidoreductase domain in the interval Arg58–Ile303. A helical transmembrane segment spans residues Val63 to Leu83. Topologically, residues Arg84–Leu104 are cytoplasmic. A helical membrane pass occupies residues His105–Val125. Over Asn126–Leu154 the chain is Extracellular. Residue Asn133 is glycosylated (N-linked (GlcNAc...) asparagine). A helical membrane pass occupies residues Leu155–Val175. The Cytoplasmic portion of the chain corresponds to Thr176–Asp188. Residues Ile189–Ser209 form a helical membrane-spanning segment. Residues Gly210–Glu424 lie on the Extracellular side of the membrane. Residues Asn218–Glu273 are E-loop; essential for H2O2 generating catalytic activity. Residues His248–Glu575 are mediates interaction with TLR4. One can recognise an FAD-binding FR-type domain in the interval Arg304–Glu419. A helical membrane pass occupies residues Val425 to Leu445. At Leu446–Ser578 the chain is on the cytoplasmic side.

As to quaternary structure, interacts with TLR4. Interacts with, relocalizes and stabilizes CYBA/p22phox. Interacts with protein disulfide isomerase. Interacts with PPP1R15A. Interacts with LRRC8A; this interaction prevents the ubiquitin-mediated degradation of LRRC8A. Heme is required as a cofactor. In terms of processing, N-glycosylation is required for the function. Expressed in vascular smooth muscle.

The protein localises to the cytoplasm. Its subcellular location is the endoplasmic reticulum membrane. The protein resides in the cell membrane. It is found in the cell junction. It localises to the focal adhesion. The protein localises to the nucleus. The catalysed reaction is NADPH + 2 O2 = 2 superoxide + NADP(+) + H(+). It catalyses the reaction NADPH + O2 + H(+) = H2O2 + NADP(+). Activated by insulin. Inhibited by diphenylene iodonium. Inhibited by plumbagin. Activated by phorbol 12-myristate 13-acetate (PMA). Its function is as follows. NADPH oxidase that catalyzes predominantly the reduction of oxygen to H2O2. Can also catalyze to a smaller extent, the reduction of oxygen to superoxide. May function as an oxygen sensor regulating the KCNK3/TASK-1 potassium channel and HIF1A activity. May regulate insulin signaling cascade. May play a role in apoptosis, bone resorption and lipolysaccharide-mediated activation of NFKB. May produce superoxide in the nucleus and play a role in regulating gene expression upon cell stimulation. Promotes ferroptosis, reactive oxygen species production and reduced glutathione (GSH) levels by activating NLRP3 inflammasome activation and cytokine release. This Rattus norvegicus (Rat) protein is NADPH oxidase 4 (Nox4).